A 263-amino-acid chain; its full sequence is Ubiquinone/menaquinone biosynthesis C-methyltransferase UbiE (263 aa).

3 residues coordinate S-adenosyl-L-methionine: Thr86, Asp107, and Ser152.

The protein belongs to the class I-like SAM-binding methyltransferase superfamily. MenG/UbiE family.

It catalyses the reaction a 2-demethylmenaquinol + S-adenosyl-L-methionine = a menaquinol + S-adenosyl-L-homocysteine + H(+). The catalysed reaction is a 2-methoxy-6-(all-trans-polyprenyl)benzene-1,4-diol + S-adenosyl-L-methionine = a 5-methoxy-2-methyl-3-(all-trans-polyprenyl)benzene-1,4-diol + S-adenosyl-L-homocysteine + H(+). The protein operates within quinol/quinone metabolism; menaquinone biosynthesis; menaquinol from 1,4-dihydroxy-2-naphthoate: step 2/2. It functions in the pathway cofactor biosynthesis; ubiquinone biosynthesis. Functionally, methyltransferase required for the conversion of demethylmenaquinol (DMKH2) to menaquinol (MKH2) and the conversion of 2-polyprenyl-6-methoxy-1,4-benzoquinol (DDMQH2) to 2-polyprenyl-3-methyl-6-methoxy-1,4-benzoquinol (DMQH2). This Brucella anthropi (strain ATCC 49188 / DSM 6882 / CCUG 24695 / JCM 21032 / LMG 3331 / NBRC 15819 / NCTC 12168 / Alc 37) (Ochrobactrum anthropi) protein is Ubiquinone/menaquinone biosynthesis C-methyltransferase UbiE.